The sequence spans 118 residues: Aspartate 1-decarboxylase (118 aa).

Serine 25 functions as the Schiff-base intermediate with substrate; via pyruvic acid in the catalytic mechanism. Serine 25 is modified (pyruvic acid (Ser)). Substrate is bound at residue threonine 57. Tyrosine 58 (proton donor) is an active-site residue. A substrate-binding site is contributed by 73-75 (GAA).

This sequence belongs to the PanD family. In terms of assembly, heterooctamer of four alpha and four beta subunits. Pyruvate serves as cofactor. Is synthesized initially as an inactive proenzyme, which is activated by self-cleavage at a specific serine bond to produce a beta-subunit with a hydroxyl group at its C-terminus and an alpha-subunit with a pyruvoyl group at its N-terminus.

The protein localises to the cytoplasm. It catalyses the reaction L-aspartate + H(+) = beta-alanine + CO2. It participates in cofactor biosynthesis; (R)-pantothenate biosynthesis; beta-alanine from L-aspartate: step 1/1. Catalyzes the pyruvoyl-dependent decarboxylation of aspartate to produce beta-alanine. In Porphyromonas gingivalis (strain ATCC 33277 / DSM 20709 / CIP 103683 / JCM 12257 / NCTC 11834 / 2561), this protein is Aspartate 1-decarboxylase.